Consider the following 444-residue polypeptide: Aspartate--tRNA(Asp/Asn) ligase (444 aa).

Glu176 is a binding site for L-aspartate. Positions 198–201 are aspartate; that stretch reads QLFK. Arg220 contributes to the L-aspartate binding site. ATP is bound by residues 220–222, 228–230, and Glu367; these read RAE and RHL. Mg(2+) contacts are provided by Glu367 and Ser370. L-aspartate is bound by residues Ser370 and Arg374. 415–418 provides a ligand contact to ATP; that stretch reads GCER.

The protein belongs to the class-II aminoacyl-tRNA synthetase family. Type 2 subfamily. In terms of assembly, homodimer. The cofactor is Mg(2+).

Its subcellular location is the cytoplasm. It catalyses the reaction tRNA(Asx) + L-aspartate + ATP = L-aspartyl-tRNA(Asx) + AMP + diphosphate. Its function is as follows. Aspartyl-tRNA synthetase with relaxed tRNA specificity since it is able to aspartylate not only its cognate tRNA(Asp) but also tRNA(Asn). Reaction proceeds in two steps: L-aspartate is first activated by ATP to form Asp-AMP and then transferred to the acceptor end of tRNA(Asp/Asn). In Methanosarcina acetivorans (strain ATCC 35395 / DSM 2834 / JCM 12185 / C2A), this protein is Aspartate--tRNA(Asp/Asn) ligase.